The chain runs to 745 residues: 1,4-alpha-glucan branching enzyme GlgB (745 aa).

Catalysis depends on D416, which acts as the Nucleophile. The active-site Proton donor is the E469.

Belongs to the glycosyl hydrolase 13 family. GlgB subfamily. As to quaternary structure, monomer.

The catalysed reaction is Transfers a segment of a (1-&gt;4)-alpha-D-glucan chain to a primary hydroxy group in a similar glucan chain.. It functions in the pathway glycan biosynthesis; glycogen biosynthesis. Catalyzes the formation of the alpha-1,6-glucosidic linkages in glycogen by scission of a 1,4-alpha-linked oligosaccharide from growing alpha-1,4-glucan chains and the subsequent attachment of the oligosaccharide to the alpha-1,6 position. The protein is 1,4-alpha-glucan branching enzyme GlgB of Shewanella sp. (strain MR-4).